The sequence spans 2003 residues: Histone acetyltransferase KAT6A (2003 aa).

Residues 1–77 form the SAMD1-like winged helix (WH) domain; it reads MVKLANPLYT…LNSYKDPDNP (77 aa). A required for activation of RUNX1-1 region spans residues 1-144; it reads MVKLANPLYT…CGGSAAPGFH (144 aa). The segment at 52–166 is required for nuclear localization; the sequence is ELSVKDGTIL…HGRLLKDGPL (115 aa). An H15 domain is found at 95 to 171; sequence QSVDWNKLLK…KDGPLYRLNT (77 aa). The tract at residues 144 to 663 is interaction with PML; it reads HQQLRLAIKR…RKGYGRFLID (520 aa). At Lys-172 the chain carries N6-acetyllysine. 2 consecutive PHD-type zinc fingers follow at residues 206-265 and 262-313; these read IPIC…CKTC and CKTC…CRPR. The segment at 312–663 is interaction with RUNX1-1; the sequence is PRKKGRKLLQ…RKGYGRFLID (352 aa). A disordered region spans residues 336-377; that stretch reads GRPKNRLKKQNTVSKGPFSKVRTGPGRGRKRKITVSSQSASS. 2 positions are modified to N6-acetyllysine: Lys-350 and Lys-355. Position 369 is a phosphothreonine; by PKB/AKT1 (Thr-369). Phosphoserine is present on Ser-419. Residues 439 to 466 form a disordered region; the sequence is RKKGNRKSSTSDWPTDNQDGWESKQENE. The span at 445–458 shows a compositional bias: polar residues; sequence KSSTSDWPTDNQDG. At Ser-472 the chain carries Phosphoserine. Residues 487–777 form a catalytic region; that stretch reads IQEQALQKVG…VDPECLRWTP (291 aa). The region spanning 503–777 is the MYST-type HAT domain; that stretch reads PQVRCPSVIE…VDPECLRWTP (275 aa). The interval 506 to 809 is mediates interaction with BRPF1, required for histone H3 acetyltransferase activity; that stretch reads RCPSVIEFGK…EPQGQERELE (304 aa). The segment at 536-561 adopts a C2HC MYST-type zinc-finger fold; sequence LYLCEFCLKYMKSRTILQQHMKKCGW. Lys-603 bears the N6-acetyllysine; by autocatalysis mark. Acetyl-CoA-binding positions include 644–648 and 653–659; these read SCIMI and QRKGYGR. Glu-679 acts as the Proton donor/acceptor in catalysis. Position 683 (Ser-683) interacts with acetyl-CoA. Residues 784–939 are disordered; it reads VVSEDEDEEA…DGKPDIPKGR (156 aa). A Phosphoserine modification is found at Ser-786. Over residues 786 to 798 the composition is skewed to acidic residues; sequence SEDEDEEADEGEK. Basic and acidic residues predominate over residues 799 to 841; it reads EEPQGQERELETRVKVGKSVSREKKDQESSSLIETDKKPEVKE. An N6-acetyllysine mark is found at Lys-813 and Lys-816. Residue Lys-836 forms a Glycyl lysine isopeptide (Lys-Gly) (interchain with G-Cter in SUMO2) linkage. The segment covering 866-875 has biased composition (basic residues); the sequence is RRGRCGRKNR. Residues 876 to 890 show a composition bias toward basic and acidic residues; that stretch reads KTQERFGDKDSKMLV. Tyr-901 is subject to Phosphotyrosine. Positions 904–917 are enriched in basic and acidic residues; it reads CEEKSETSQERFTE. Phosphoserine is present on residues Ser-941 and Ser-954. The segment at 983-1083 is disordered; sequence GFSESSEEEE…EEEESELFPR (101 aa). Lys-1007 bears the N6-acetyllysine mark. Basic residues predominate over residues 1009–1030; sequence TLKRKKPILHRRRRVRKRKHHN. Residues 1031 to 1042 are compositionally biased toward low complexity; that stretch reads SSVVTETISETT. Composition is skewed to acidic residues over residues 1043–1053 and 1065–1079; these read EVLDEPFEDSD and FEME…EESE. Phosphoserine occurs at positions 1090, 1091, and 1115. 5 disordered regions span residues 1096 to 1174, 1197 to 1438, 1455 to 1533, 1546 to 1568, and 1631 to 1707; these read RCQS…RKPG, IKPG…GAYQ, HTDE…PSVS, DLGS…STMG, and TCVV…CSMN. A compositionally biased stretch (acidic residues) spans 1107–1120; that stretch reads EEEEEEEESDDADD. Residues 1136-1147 are compositionally biased toward polar residues; sequence NSASLEPDTSTP. Residues 1148–1174 are compositionally biased toward basic residues; that stretch reads MKKKKGWPKGKSRKPIHWKKRPGRKPG. A compositionally biased stretch (basic and acidic residues) spans 1204–1229; it reads RTQENEEIVEVKEDLLEERKEEMHTE. Composition is skewed to acidic residues over residues 1230–1241 and 1282–1299; these read PDEEAEEEEDTT and EEPQ…DEVT. Basic and acidic residues predominate over residues 1317-1334; sequence HLDSLKTKEPEEQPARED. A Glycyl lysine isopeptide (Lys-Gly) (interchain with G-Cter in SUMO2) cross-link involves residue Lys-1336. 2 stretches are compositionally biased toward basic and acidic residues: residues 1352 to 1361 and 1393 to 1414; these read DSRENTKDKD and DSNT…HSEL. Residues 1473 to 1490 show a composition bias toward low complexity; the sequence is HNSPISSIPSHPSQSVRS. Polar residues-rich tracts occupy residues 1502 to 1523 and 1550 to 1568; these read GYTQ…NMET and IEST…STMG. Residues 1511–1636 are interaction with RUNX1-2; it reads GSLSAPSMQN…KSPQTCVVER (126 aa). Positions 1511-1740 are interaction with PML; sequence GSLSAPSMQN…YERIPGDFGA (230 aa). Composition is skewed to pro residues over residues 1640 to 1673 and 1682 to 1698; these read NQQP…PPQP and QPPP…PQQQ. The segment at 1912–1947 is required for activation of RUNX1-2; that stretch reads SMNMNTLNAMNSYRMTQPMMNSSYHSNPAYMNQTAQ.

This sequence belongs to the MYST (SAS/MOZ) family. Component of the MOZ/MORF complex composed at least of ING5, KAT6A, KAT6B, MEAF6 and one of BRPF1, BRD1/BRPF2 and BRPF3. Interacts with RUNX2. Interacts with RUNX1; phosphorylation of RUNX1 enhances the interaction. Interacts with p53/TP53. Interacts with PML and this interaction positively regulates its acetylation activity towards p53/TP53. Post-translationally, autoacetylated. Autoacetylation at Lys-603 is required for proper function. In terms of processing, phosphorylation at Thr-369 by PKB/AKT1 inhibits its interaction with PML and negatively regulates its acetylation activity towards p53/TP53.

It is found in the nucleus. The protein localises to the nucleolus. Its subcellular location is the nucleoplasm. It localises to the PML body. The catalysed reaction is L-lysyl-[protein] + acetyl-CoA = N(6)-acetyl-L-lysyl-[protein] + CoA + H(+). In terms of biological role, histone acetyltransferase that acetylates lysine residues in histone H3 and histone H4 (in vitro). Component of the MOZ/MORF complex which has a histone H3 acetyltransferase activity. May act as a transcriptional coactivator for RUNX1 and RUNX2. Acetylates p53/TP53 at 'Lys-120' and 'Lys-382' and controls its transcriptional activity via association with PML. This is Histone acetyltransferase KAT6A (Kat6a) from Mus musculus (Mouse).